The following is a 411-amino-acid chain: Na(+)-translocating NADH-quinone reductase subunit F (411 aa).

Residues 5–25 (VILALGIAAFTVIVLVLVAII) form a helical membrane-spanning segment. The 95-residue stretch at 36–130 (GDITIDINDD…NMEVELPEEI (95 aa)) folds into the 2Fe-2S ferredoxin-type domain. Cys73, Cys79, Cys82, and Cys114 together coordinate [2Fe-2S] cluster. The 141-residue stretch at 133 to 273 (VKKWECTVIS…SGPFGEFFAK (141 aa)) folds into the FAD-binding FR-type domain. The segment at 276–393 (DAEMVFIGGG…PVMNAAVIKM (118 aa)) is catalytic.

Belongs to the NqrF family. Composed of six subunits; NqrA, NqrB, NqrC, NqrD, NqrE and NqrF. The cofactor is [2Fe-2S] cluster. FAD is required as a cofactor.

It localises to the cell inner membrane. It carries out the reaction a ubiquinone + n Na(+)(in) + NADH + H(+) = a ubiquinol + n Na(+)(out) + NAD(+). Functionally, NQR complex catalyzes the reduction of ubiquinone-1 to ubiquinol by two successive reactions, coupled with the transport of Na(+) ions from the cytoplasm to the periplasm. The first step is catalyzed by NqrF, which accepts electrons from NADH and reduces ubiquinone-1 to ubisemiquinone by a one-electron transfer pathway. This is Na(+)-translocating NADH-quinone reductase subunit F from Haemophilus influenzae (strain ATCC 51907 / DSM 11121 / KW20 / Rd).